The primary structure comprises 436 residues: ATP-dependent protease ATPase subunit HslU (436 aa).

ATP-binding positions include Ile19, 61 to 65 (GVGKT), Asp249, Glu314, and Arg386.

The protein belongs to the ClpX chaperone family. HslU subfamily. A double ring-shaped homohexamer of HslV is capped on each side by a ring-shaped HslU homohexamer. The assembly of the HslU/HslV complex is dependent on binding of ATP.

The protein resides in the cytoplasm. Its function is as follows. ATPase subunit of a proteasome-like degradation complex; this subunit has chaperone activity. The binding of ATP and its subsequent hydrolysis by HslU are essential for unfolding of protein substrates subsequently hydrolyzed by HslV. HslU recognizes the N-terminal part of its protein substrates and unfolds these before they are guided to HslV for hydrolysis. The polypeptide is ATP-dependent protease ATPase subunit HslU (Bartonella henselae (strain ATCC 49882 / DSM 28221 / CCUG 30454 / Houston 1) (Rochalimaea henselae)).